Here is a 686-residue protein sequence, read N- to C-terminus: Translation initiation factor IF-2 (686 aa).

The disordered stretch occupies residues 61 to 98; that stretch reads FEVEEKVVRSKKNSNKKKKKGKGNEDKRQENFAGRQQT. Residues 69-81 are compositionally biased toward basic residues; sequence RSKKNSNKKKKKG. Positions 188–357 constitute a tr-type G domain; it reads ERPAVVTIMG…LLVSEVEEYK (170 aa). The G1 stretch occupies residues 197-204; sequence GHVDHGKT. 197 to 204 serves as a coordination point for GTP; the sequence is GHVDHGKT. Residues 222 to 226 form a G2 region; sequence GITQH. Positions 243 to 246 are G3; the sequence is DTPG. GTP contacts are provided by residues 243–247 and 297–300; these read DTPGH and NKMD. The segment at 297–300 is G4; the sequence is NKMD. Residues 333 to 335 form a G5 region; that stretch reads SAI.

The protein belongs to the TRAFAC class translation factor GTPase superfamily. Classic translation factor GTPase family. IF-2 subfamily.

It localises to the cytoplasm. In terms of biological role, one of the essential components for the initiation of protein synthesis. Protects formylmethionyl-tRNA from spontaneous hydrolysis and promotes its binding to the 30S ribosomal subunits. Also involved in the hydrolysis of GTP during the formation of the 70S ribosomal complex. The polypeptide is Translation initiation factor IF-2 (Bacillus cereus (strain B4264)).